Consider the following 665-residue polypeptide: Cysteine-rich receptor-like protein kinase 41 (665 aa).

Residues 1 to 27 (MTSSCSLSRPQHLFFFFFLFVPFLSLG) form the signal peptide. Over 28–280 (QQISVDINSA…DPKPGNDKVK (253 aa)) the chain is Extracellular. Gnk2-homologous domains follow at residues 42 to 148 (PSNP…DKPI) and 154 to 260 (TSPV…SDLR). N-linked (GlcNAc...) asparagine glycans are attached at residues Asn-120, Asn-165, and Asn-236. Residues 281–301 (IIIATVCSVIGFAIIAVFLYF) traverse the membrane as a helical segment. The Cytoplasmic portion of the chain corresponds to 302-665 (FMTRNRRTAK…DVTITEFDAR (364 aa)). The region spanning 344–624 (FSRDNQLGEG…VVMLNANSFT (281 aa)) is the Protein kinase domain. ATP-binding positions include 350 to 358 (LGEGGFGAV) and Lys-372. Tyr-417 is subject to Phosphotyrosine. Catalysis depends on Asp-469, which acts as the Proton acceptor. Ser-473 bears the Phosphoserine mark. Thr-511 carries the phosphothreonine modification. Tyr-519 is subject to Phosphotyrosine.

This sequence belongs to the protein kinase superfamily. Ser/Thr protein kinase family. CRK subfamily.

Its subcellular location is the membrane. The enzyme catalyses L-seryl-[protein] + ATP = O-phospho-L-seryl-[protein] + ADP + H(+). It catalyses the reaction L-threonyl-[protein] + ATP = O-phospho-L-threonyl-[protein] + ADP + H(+). The protein is Cysteine-rich receptor-like protein kinase 41 (CRK41) of Arabidopsis thaliana (Mouse-ear cress).